The primary structure comprises 226 residues: MGVNSSKINDKDRSILSIKEQRDKLLRYSKRLEKIEQLEIDIARKCLRDSDKRGALRALKAKKLYSGLITQTYGQLGNIEQLLSTIEFTLIQKDVMFGLQEGTNLIRQLQADMPLERVGRICNDRDEAMSYVDEVNDMLQGRMSRDQEDEIQEELDSLIREQEDEKVKDLEKPGFTPSTGVDVLPSVPLKNAIPSLDESFPKAASVSNTSSAVVIDEELRKDPVLG.

Residue Gly-2 is the site of N-myristoyl glycine attachment.

The protein belongs to the SNF7 family. Component of the endosomal sorting required for transport complex III (ESCRT-III).

It localises to the endosome membrane. The protein resides in the vacuole membrane. It is found in the cytoplasm. Its subcellular location is the cell cortex. Its function is as follows. Class E VPS protein implicated in concentration and sorting of cargo proteins of the multivesicular body (MVB) for incorporation into intralumenal vesicles. The lumenal sequestrated membrane proteins will be targeted into the vacuole after fusion of the endosome with the vacuole. This is Vacuolar protein sorting-associated protein 20 (vps20) from Schizosaccharomyces pombe (strain 972 / ATCC 24843) (Fission yeast).